The sequence spans 425 residues: Trigger factor (425 aa).

The 86-residue stretch at 163–248 (GDTAVIDFEG…VHEIKTKELP (86 aa)) folds into the PPIase FKBP-type domain.

It belongs to the FKBP-type PPIase family. Tig subfamily.

It is found in the cytoplasm. It carries out the reaction [protein]-peptidylproline (omega=180) = [protein]-peptidylproline (omega=0). Its function is as follows. Involved in protein export. Acts as a chaperone by maintaining the newly synthesized protein in an open conformation. Functions as a peptidyl-prolyl cis-trans isomerase. This chain is Trigger factor, found in Bacillus cereus (strain ATCC 10987 / NRS 248).